The sequence spans 339 residues: Heat-inducible transcription repressor HrcA (339 aa).

The protein belongs to the HrcA family.

Its function is as follows. Negative regulator of class I heat shock genes (grpE-dnaK-dnaJ and groELS operons). Prevents heat-shock induction of these operons. The sequence is that of Heat-inducible transcription repressor HrcA from Cutibacterium acnes (strain DSM 16379 / KPA171202) (Propionibacterium acnes).